Reading from the N-terminus, the 204-residue chain is Peptide deformylase (204 aa).

Fe cation is bound by residues Cys-131 and His-174. The active site involves Glu-175. His-178 is a binding site for Fe cation.

It belongs to the polypeptide deformylase family. It depends on Fe(2+) as a cofactor.

The enzyme catalyses N-terminal N-formyl-L-methionyl-[peptide] + H2O = N-terminal L-methionyl-[peptide] + formate. Removes the formyl group from the N-terminal Met of newly synthesized proteins. Requires at least a dipeptide for an efficient rate of reaction. N-terminal L-methionine is a prerequisite for activity but the enzyme has broad specificity at other positions. The polypeptide is Peptide deformylase (Streptococcus pyogenes serotype M49 (strain NZ131)).